The chain runs to 289 residues: ATP synthase subunit a (289 aa).

The next 6 membrane-spanning stretches (helical) occupy residues 43-63, 104-124, 160-180, 193-213, 232-252, and 259-279; these read AFHL…LLIF, IAPL…VDLI, FCVF…GGFI, IFVQ…TLIA, VFIL…GLGV, and AVFH…LTIV.

It belongs to the ATPase A chain family. F-type ATPases have 2 components, CF(1) - the catalytic core - and CF(0) - the membrane proton channel. CF(1) has five subunits: alpha(3), beta(3), gamma(1), delta(1), epsilon(1). CF(0) has three main subunits: a(1), b(2) and c(9-12). The alpha and beta chains form an alternating ring which encloses part of the gamma chain. CF(1) is attached to CF(0) by a central stalk formed by the gamma and epsilon chains, while a peripheral stalk is formed by the delta and b chains.

The protein localises to the cell inner membrane. In terms of biological role, key component of the proton channel; it plays a direct role in the translocation of protons across the membrane. The polypeptide is ATP synthase subunit a (Pseudomonas putida (strain ATCC 47054 / DSM 6125 / CFBP 8728 / NCIMB 11950 / KT2440)).